The following is a 400-amino-acid chain: Putative niacin/nicotinamide transporter NiaP (400 aa).

Residues 1 to 14 (MGKQQPISQRKLLG) lie on the Cytoplasmic side of the membrane. Residues 15-35 (VAGLGWLFDAMDVGILSFIIA) form a helical membrane-spanning segment. Topologically, residues 36 to 49 (ALHVEWNLSPEEMK) are extracellular. The helical transmembrane segment at 50 to 70 (WIGSVNSIGMAAGAFLFGLLA) threads the bilayer. Over 71–77 (DRIGRKK) the chain is Cytoplasmic. A run of 2 helical transmembrane segments spans residues 78–98 (VFIITLLCFSIGSGISAFVTS) and 99–119 (LSAFLILRFVIGMGLGGELPV). Residues 120–142 (ASTLVSEAVVPEKRGRVIVLLES) lie on the Cytoplasmic side of the membrane. The helical transmembrane segment at 143–163 (FWAVGWLAAALISYFVIPSFG) threads the bilayer. Over 164-165 (WQ) the chain is Extracellular. The helical transmembrane segment at 166 to 186 (AALLLTALTAFYALYLRTSLP) threads the bilayer. Residues 187-217 (DSPKYESLSAKKRSMWENVKSVWARQYIRPT) lie on the Cytoplasmic side of the membrane. The chain crosses the membrane as a helical span at residues 218–238 (VMLSIVWFCVVFSYYGMFLWL). The Extracellular portion of the chain corresponds to 239–253 (PSVMLLKGFSMIQSF). A helical membrane pass occupies residues 254–274 (EYVLLMTLAQLPGYFSAAWLI). Residues 275 to 280 (EKAGRK) are Cytoplasmic-facing. Residues 281 to 301 (WILVVYLIGTAGSAYFFGTAD) form a helical membrane-spanning segment. At 302-304 (SLS) the chain is on the extracellular side. A helical membrane pass occupies residues 305-325 (LLLTAGVLLSFFNLGAWGVLY). Residues 326 to 343 (AYTPEQYPTAIRATGSGT) lie on the Cytoplasmic side of the membrane. The chain crosses the membrane as a helical span at residues 344–364 (TAAFGRIGGIFGPLLVGTLAA). Residues 365–370 (RHISFS) lie on the Extracellular side of the membrane. A helical transmembrane segment spans residues 371–391 (VIFSIFCIAILLAVACILIMG). Over 392–400 (KETKQTELE) the chain is Cytoplasmic.

The protein belongs to the major facilitator superfamily. Sugar transporter (TC 2.A.1.1) family.

It localises to the cell membrane. Its function is as follows. Probably involved in the uptake of amidated and deamidated forms of niacin. Increases the growth rate of E.coli that is unable to make niacin de novo; confers increased sensitivity to the toxic niacin analog 6-amino-nicotinamide to wild-type E.coli. There is probably another mechanism for niacin uptake. The polypeptide is Putative niacin/nicotinamide transporter NiaP (Bacillus subtilis (strain 168)).